The primary structure comprises 173 residues: EDLRNVTPPKVSLFEPSKAEIANKQKATLVCLARGFFPDHVELSWWVNGKEVHSGVSTDPQAYKESNYSYCLSSRLRVSATFWHNPRNHFRCQVQFHGLSEEDKWPEGSPKPVTQNISAEAWGRADCGITSASYHQGVLSATILYEILLGKATLYAVLVSGLVLMAMVKKKNS.

The tract at residues 1–146 is c region; it reads EDLRNVTPPK…GVLSATILYE (146 aa). Asn67 and Asn116 each carry an N-linked (GlcNAc...) asparagine glycan. A helical transmembrane segment spans residues 147–168; the sequence is ILLGKATLYAVLVSGLVLMAMV. Residues 169 to 173 are Cytoplasmic-facing; the sequence is KKKNS.

It localises to the membrane. The sequence is that of T-cell receptor beta-2 chain C region from Mus musculus (Mouse).